The sequence spans 338 residues: Lipoate-protein ligase A (338 aa).

Residues 29–216 (PATQRVLFLW…AFFAHYGEHV (188 aa)) enclose the BPL/LPL catalytic domain. Residues R71, 76–79 (GAVF), and K134 each bind ATP. K134 is a (R)-lipoate binding site.

The protein belongs to the LplA family. As to quaternary structure, monomer.

It is found in the cytoplasm. It catalyses the reaction L-lysyl-[lipoyl-carrier protein] + (R)-lipoate + ATP = N(6)-[(R)-lipoyl]-L-lysyl-[lipoyl-carrier protein] + AMP + diphosphate + H(+). The protein operates within protein modification; protein lipoylation via exogenous pathway; protein N(6)-(lipoyl)lysine from lipoate: step 1/2. Its pathway is protein modification; protein lipoylation via exogenous pathway; protein N(6)-(lipoyl)lysine from lipoate: step 2/2. Functionally, catalyzes both the ATP-dependent activation of exogenously supplied lipoate to lipoyl-AMP and the transfer of the activated lipoyl onto the lipoyl domains of lipoate-dependent enzymes. The sequence is that of Lipoate-protein ligase A from Escherichia coli O17:K52:H18 (strain UMN026 / ExPEC).